The chain runs to 779 residues: Molybdenum cofactor sulfurase (779 aa).

Lysine 247 bears the N6-(pyridoxal phosphate)lysine mark. Cysteine 409 is a catalytic residue. The MOSC domain occupies 624–779; that stretch reads SQSLGLEGVR…LTCGDVIVVS (156 aa). A Phosphoserine modification is found at serine 732.

It belongs to the class-V pyridoxal-phosphate-dependent aminotransferase family. MOCOS subfamily. Requires pyridoxal 5'-phosphate as cofactor.

The catalysed reaction is Mo-molybdopterin + L-cysteine + AH2 = thio-Mo-molybdopterin + L-alanine + A + H2O. Its pathway is cofactor biosynthesis; molybdopterin biosynthesis. Sulfurates the molybdenum cofactor. Sulfation of molybdenum is essential for xanthine dehydrogenase (XDH) and aldehyde oxidase (ADO) enzymes in which molybdenum cofactor is liganded by 1 oxygen and 1 sulfur atom in active form. In Drosophila mojavensis (Fruit fly), this protein is Molybdenum cofactor sulfurase.